The primary structure comprises 362 residues: Phosphoserine aminotransferase (362 aa).

2 residues coordinate L-glutamate: S9 and R42. Pyridoxal 5'-phosphate is bound by residues 76–77 (AR), W102, T153, D174, and Q197. K198 carries the post-translational modification N6-(pyridoxal phosphate)lysine. 239–240 (NT) is a pyridoxal 5'-phosphate binding site.

It belongs to the class-V pyridoxal-phosphate-dependent aminotransferase family. SerC subfamily. As to quaternary structure, homodimer. The cofactor is pyridoxal 5'-phosphate.

The protein resides in the cytoplasm. It carries out the reaction O-phospho-L-serine + 2-oxoglutarate = 3-phosphooxypyruvate + L-glutamate. The catalysed reaction is 4-(phosphooxy)-L-threonine + 2-oxoglutarate = (R)-3-hydroxy-2-oxo-4-phosphooxybutanoate + L-glutamate. Its pathway is amino-acid biosynthesis; L-serine biosynthesis; L-serine from 3-phospho-D-glycerate: step 2/3. It functions in the pathway cofactor biosynthesis; pyridoxine 5'-phosphate biosynthesis; pyridoxine 5'-phosphate from D-erythrose 4-phosphate: step 3/5. Its function is as follows. Catalyzes the reversible conversion of 3-phosphohydroxypyruvate to phosphoserine and of 3-hydroxy-2-oxo-4-phosphonooxybutanoate to phosphohydroxythreonine. This chain is Phosphoserine aminotransferase, found in Photorhabdus laumondii subsp. laumondii (strain DSM 15139 / CIP 105565 / TT01) (Photorhabdus luminescens subsp. laumondii).